The primary structure comprises 469 residues: UDP-N-acetylmuramate--L-alanine ligase (469 aa).

Residue 113–119 coordinates ATP; that stretch reads GTHGKTT.

Belongs to the MurCDEF family.

It is found in the cytoplasm. The enzyme catalyses UDP-N-acetyl-alpha-D-muramate + L-alanine + ATP = UDP-N-acetyl-alpha-D-muramoyl-L-alanine + ADP + phosphate + H(+). Its pathway is cell wall biogenesis; peptidoglycan biosynthesis. In terms of biological role, cell wall formation. This chain is UDP-N-acetylmuramate--L-alanine ligase, found in Neisseria meningitidis serogroup C / serotype 2a (strain ATCC 700532 / DSM 15464 / FAM18).